Consider the following 574-residue polypeptide: (R)-mandelonitrile lyase 4 (574 aa).

Residues 1 to 27 (MEKSTMSAVVLVLNLLVLHLQYSEVHS) form the signal peptide. N30 carries N-linked (GlcNAc...) asparagine glycosylation. 64–65 (TS) serves as a coordination point for FAD. N76 carries N-linked (GlcNAc...) asparagine glycosylation. FAD contacts are provided by residues 83-84 (ER), T134, and 138-141 (NAGV). N-linked (GlcNAc...) asparagine glycosylation is found at N146, N151, and N179. FAD is bound at residue V245. N-linked (GlcNAc...) asparagine glycosylation is found at N268 and N310. C357 contacts substrate. N-linked (GlcNAc...) asparagine glycans are attached at residues N381, N407, and N468. Cysteines 428 and 479 form a disulfide. Residue Y486 participates in substrate binding. Residues 487–488 (WH) and G516 each bind FAD. Catalysis depends on H488, which acts as the Proton donor. H526 acts as the Proton acceptor in catalysis. 527 to 528 (PQ) provides a ligand contact to FAD.

This sequence belongs to the GMC oxidoreductase family. In terms of assembly, monomer. It depends on FAD as a cofactor.

It is found in the vacuole. Its subcellular location is the aleurone grain. It carries out the reaction (R)-mandelonitrile = benzaldehyde + hydrogen cyanide. In terms of biological role, involved in cyanogenesis, the release of HCN from injured tissues. Catalyzes the stereospecific addition of HCN to a variety of aldehydes in vitro. It is a major seed constituent, and could have the additional role of a storage form for reduced nitrogen. This Prunus serotina (Black cherry) protein is (R)-mandelonitrile lyase 4 (MDL4).